The following is a 338-amino-acid chain: Citramalyl-CoA lyase, mitochondrial (338 aa).

A mitochondrion-targeting transit peptide spans 1–20; that stretch reads MALCVLQNAVRGAAALPRLK. Tyr-48, Lys-55, and Lys-59 together coordinate substrate. N6-acetyllysine is present on residues Lys-55, Lys-59, and Lys-64. An N6-acetyllysine; alternate mark is found at Lys-80 and Lys-90. N6-succinyllysine; alternate occurs at positions 80 and 90. Arg-105 lines the substrate pocket. Residues Glu-169 and Asp-204 each contribute to the Mg(2+) site. 270 to 271 serves as a coordination point for substrate; sequence IH. Lys-307 carries the N6-succinyllysine modification. Asp-318 is a catalytic residue.

This sequence belongs to the HpcH/HpaI aldolase family. Citrate lyase beta subunit-like subfamily. As to quaternary structure, homotrimer. Requires Mg(2+) as cofactor.

It localises to the mitochondrion. It carries out the reaction glyoxylate + acetyl-CoA + H2O = (S)-malate + CoA + H(+). The enzyme catalyses propanoyl-CoA + glyoxylate + H2O = 3-methylmalate + CoA + H(+). The catalysed reaction is (3S)-citramalyl-CoA = pyruvate + acetyl-CoA. It catalyses the reaction (S)-malyl-CoA + H2O = (S)-malate + CoA + H(+). Functionally, mitochondrial citramalyl-CoA lyase indirectly involved in the vitamin B12 metabolism. Converts citramalyl-CoA into acetyl-CoA and pyruvate in the C5-dicarboxylate catabolism pathway. The C5-dicarboxylate catabolism pathway is required to detoxify itaconate, a vitamin B12-poisoning metabolite. Also acts as a malate synthase in vitro, converting glyoxylate and acetyl-CoA to malate. Also displays malyl-CoA thioesterase activity. Also acts as a beta-methylmalate synthase in vitro, by mediating conversion of glyoxylate and propionyl-CoA to beta-methylmalate. Also has very weak citramalate synthase activity in vitro. The polypeptide is Citramalyl-CoA lyase, mitochondrial (Clybl) (Rattus norvegicus (Rat)).